The primary structure comprises 249 residues: Isoprenyl transferase 1 (249 aa).

Residue aspartate 30 is part of the active site. Aspartate 30 contacts Mg(2+). Substrate is bound by residues 31–34 (GNGR), tryptophan 35, arginine 43, histidine 47, and 75–77 (STE). The Proton acceptor role is filled by asparagine 78. Substrate is bound by residues tryptophan 79, arginine 81, arginine 198, and 204–206 (RMS). Glutamate 217 contributes to the Mg(2+) binding site.

This sequence belongs to the UPP synthase family. In terms of assembly, homodimer. It depends on Mg(2+) as a cofactor.

Its function is as follows. Catalyzes the condensation of isopentenyl diphosphate (IPP) with allylic pyrophosphates generating different type of terpenoids. This chain is Isoprenyl transferase 1, found in Tropheryma whipplei (strain Twist) (Whipple's bacillus).